Here is a 531-residue protein sequence, read N- to C-terminus: Cytochrome P450 monooxygenase peniB (531 aa).

The chain crosses the membrane as a helical span at residues 30-48 (ILSIAAVVFLGYLLLRPLF). Cys-445 is a binding site for heme.

This sequence belongs to the cytochrome P450 family. Heme is required as a cofactor.

The protein localises to the membrane. It catalyses the reaction silphinene-15-oate + 2 reduced [NADPH--hemoprotein reductase] + 2 O2 = gamma-lactone-2-keto[5.5.5.5]fenestrane + 2 oxidized [NADPH--hemoprotein reductase] + 3 H2O + H(+). Its pathway is secondary metabolite biosynthesis; terpenoid biosynthesis. Its function is as follows. Cytochrome P450 monooxygenase; part of the gene cluster that mediates the biosynthesis of penifulvin A, a potent insecticidal sesquiterpene that features a [5.5.5.6]dioxafenestrane ring. Within the pathway, peniB catalyzes the multi-step oxidation of silphinene to synthesize gamma-lactone-2-keto[5.5.5.5]fenestrane, including oxidation of the C15 methylgroup in silphinene to form silphinene-15-oic acid, activationof the C1-C2 double bond to form the gamma-lactone-2-hydroxy[5.5.5.5]fenestrane, and dehydrogenation of the hydroxy group at C2 of gamma-lactone-2-hydroxy[5.5.5.5]fenestrane to generate gamma-lactone-2-keto[5.5.5.5]fenestrane. The first step of the pathway is performed by the sesquiterpene cyclase peniA that generates the angular triquinane scaffold silphinene via cyclization of the linear farnesyl pyrophosphate (FPP). The cytochrome P450 monooxygenase peniB and the flavin-dependent monooxygenase peniC then catalyze a series of oxidation reactions to transform silphinene into penifulvin A. In Penicillium patulum (Penicillium griseofulvum), this protein is Cytochrome P450 monooxygenase peniB.